Consider the following 342-residue polypeptide: Serpentine receptor class gamma-69 (342 aa).

7 helical membrane passes run 11-31, 51-71, 106-126, 140-160, 191-211, 222-242, and 269-289; these read MAGLIGIYAFQGFYGLLSVVV, SLLYTCCAALSLTYFLDHFLI, PIAILVFHALIAAHRFSIVAA, LFVLVGFLIPLIFMWFMIPCK, IAAVLFGVLTLCLTFGMLIAL, AEISLIVFEVFMTVFTLIYAF, and FAIDIFILPQAWTLLFLSTTV.

The protein belongs to the nematode receptor-like protein srg family.

The protein localises to the membrane. This chain is Serpentine receptor class gamma-69 (srg-69), found in Caenorhabditis elegans.